The chain runs to 538 residues: CTP synthase (538 aa).

The tract at residues 1 to 267 (MDRAKFIFVT…LTPIARRFNL (267 aa)) is amidoligase domain. Serine 15 contributes to the CTP binding site. Serine 15 is a UTP binding site. ATP contacts are provided by residues 16 to 21 (SLGKGI) and aspartate 73. Mg(2+)-binding residues include aspartate 73 and glutamate 141. CTP contacts are provided by residues 148–150 (DME), 188–193 (KTKPTQ), and lysine 224. Residues 188–193 (KTKPTQ) and lysine 224 each bind UTP. Residues 292–538 (KIGFVGKYLS…DFIKSALSKS (247 aa)) enclose the Glutamine amidotransferase type-1 domain. Position 351 (glycine 351) interacts with L-glutamine. The active-site Nucleophile; for glutamine hydrolysis is cysteine 378. Residues 379–382 (LGMQ), glutamate 402, and arginine 469 each bind L-glutamine. Residues histidine 513 and glutamate 515 contribute to the active site.

Belongs to the CTP synthase family. Homotetramer.

The enzyme catalyses UTP + L-glutamine + ATP + H2O = CTP + L-glutamate + ADP + phosphate + 2 H(+). It carries out the reaction L-glutamine + H2O = L-glutamate + NH4(+). It catalyses the reaction UTP + NH4(+) + ATP = CTP + ADP + phosphate + 2 H(+). Its pathway is pyrimidine metabolism; CTP biosynthesis via de novo pathway; CTP from UDP: step 2/2. Its activity is regulated as follows. Allosterically activated by GTP, when glutamine is the substrate; GTP has no effect on the reaction when ammonia is the substrate. The allosteric effector GTP functions by stabilizing the protein conformation that binds the tetrahedral intermediate(s) formed during glutamine hydrolysis. Inhibited by the product CTP, via allosteric rather than competitive inhibition. Catalyzes the ATP-dependent amination of UTP to CTP with either L-glutamine or ammonia as the source of nitrogen. Regulates intracellular CTP levels through interactions with the four ribonucleotide triphosphates. This Helicobacter pylori (strain ATCC 700392 / 26695) (Campylobacter pylori) protein is CTP synthase.